The primary structure comprises 448 residues: B-cell lymphoma 3 protein homolog (448 aa).

The interval 1–54 (MPRCPAGAMDEGPVDLRTRPKGTPGAALPLRKRPLRPASPEPATTRSPAGPLDA) is disordered. Phosphoserine is present on Ser39. ANK repeat units lie at residues 129–161 (DGDT…REVD), 166–195 (LRQT…SPMA), 199–228 (HGQT…SGSV), 236–265 (EGLT…DIDA), 270–299 (SGRS…NVNA), 303–332 (SGSS…DSGL), and 333–362 (KNCH…RAAS). Residues 356-448 (KASRAASGSQ…VPPSPAPGSS (93 aa)) form a disordered region. Polar residues predominate over residues 361 to 376 (ASGSQPEPSPDQSATN). Position 369 is a phosphoserine (Ser369). Low complexity predominate over residues 377–398 (SPESSSRLSSNGLQSSPSSSPS). Residues Ser396 and Ser400 each carry the phosphoserine; by GSK3 modification. The span at 411–423 (TPQNFFLPTTSTP) shows a compositional bias: polar residues. Low complexity predominate over residues 425 to 436 (FLPFPGVLRGPG). Pro residues predominate over residues 437-448 (RPVPPSPAPGSS).

As to quaternary structure, component of a complex consisting of the NF-kappa-B p52-p52 homodimer and BCL3. Component of a complex consisting of the NF-kappa-B p50-p50 homodimer and BCL3. Interacts with N4BP2, COPS5 and PIR. Interacts with CYLD. In terms of processing, polyubiquitinated. Ubiquitination via 'Lys-63'-linked ubiquitin chains is required for nuclear accumulation. Deubiquitinated by CYLD, which acts on 'Lys-63'-linked ubiquitin chains. Deubiquitination by CYLD prevents nuclear accumulation. Post-translationally, activated by phosphorylation.

The protein resides in the nucleus. It localises to the cytoplasm. The protein localises to the perinuclear region. Functionally, contributes to the regulation of transcriptional activation of NF-kappa-B target genes. In the cytoplasm, inhibits the nuclear translocation of the NF-kappa-B p50 subunit. In the nucleus, acts as a transcriptional activator that promotes transcription of NF-kappa-B target genes. Contributes to the regulation of cell proliferation. In Mus musculus (Mouse), this protein is B-cell lymphoma 3 protein homolog (Bcl3).